The following is a 196-amino-acid chain: 3-dehydroquinate dehydratase (196 aa).

Residues 23–25 and Arg-45 contribute to the 3-dehydroquinate site; that span reads ELR. His-98 serves as the catalytic Proton donor/acceptor. The active-site Schiff-base intermediate with substrate is the Lys-122. The 3-dehydroquinate site is built by Arg-159 and Gln-182.

Belongs to the type-I 3-dehydroquinase family. As to quaternary structure, homodimer.

It carries out the reaction 3-dehydroquinate = 3-dehydroshikimate + H2O. It participates in metabolic intermediate biosynthesis; chorismate biosynthesis; chorismate from D-erythrose 4-phosphate and phosphoenolpyruvate: step 3/7. Its function is as follows. Involved in the third step of the chorismate pathway, which leads to the biosynthesis of aromatic amino acids. Catalyzes the cis-dehydration of 3-dehydroquinate (DHQ) and introduces the first double bond of the aromatic ring to yield 3-dehydroshikimate. The polypeptide is 3-dehydroquinate dehydratase (Archaeoglobus fulgidus (strain ATCC 49558 / DSM 4304 / JCM 9628 / NBRC 100126 / VC-16)).